The sequence spans 232 residues: Probable fimbrial chaperone LpfB (232 aa).

Positions 1 to 24 are cleaved as a signal peptide; sequence MDRMMKSKFVALALSLFLSQSVLA.

The protein belongs to the periplasmic pilus chaperone family.

Its subcellular location is the periplasm. In terms of biological role, part of the lpfABCC'DE fimbrial operon. LP fimbriae may participate in the interaction with eukaryotic cells by assisting in microcolony formation. The polypeptide is Probable fimbrial chaperone LpfB (lpfB) (Escherichia coli O157:H7).